The sequence spans 79 residues: Acyl carrier protein (79 aa).

Residues 2-77 (SEIADKVKKI…DAIDYIEKQK (76 aa)) enclose the Carrier domain. Ser37 bears the O-(pantetheine 4'-phosphoryl)serine mark.

This sequence belongs to the acyl carrier protein (ACP) family. In terms of processing, 4'-phosphopantetheine is transferred from CoA to a specific serine of apo-ACP by AcpS. This modification is essential for activity because fatty acids are bound in thioester linkage to the sulfhydryl of the prosthetic group.

Its subcellular location is the cytoplasm. It participates in lipid metabolism; fatty acid biosynthesis. In terms of biological role, carrier of the growing fatty acid chain in fatty acid biosynthesis. This Gluconacetobacter diazotrophicus (strain ATCC 49037 / DSM 5601 / CCUG 37298 / CIP 103539 / LMG 7603 / PAl5) protein is Acyl carrier protein.